A 186-amino-acid chain; its full sequence is Cell division protein ZapC (186 aa).

It belongs to the ZapC family. As to quaternary structure, interacts directly with FtsZ.

The protein resides in the cytoplasm. Functionally, contributes to the efficiency of the cell division process by stabilizing the polymeric form of the cell division protein FtsZ. Acts by promoting interactions between FtsZ protofilaments and suppressing the GTPase activity of FtsZ. This is Cell division protein ZapC from Musicola paradisiaca (strain Ech703) (Dickeya paradisiaca).